We begin with the raw amino-acid sequence, 71 residues long: Small ribosomal subunit protein bS21 (71 aa).

Basic residues predominate over residues 48–59; that stretch reads AKASAVKRHAKK. The interval 48–71 is disordered; sequence AKASAVKRHAKKLSRENARRIRLY. The span at 60-71 shows a compositional bias: basic and acidic residues; that stretch reads LSRENARRIRLY.

It belongs to the bacterial ribosomal protein bS21 family.

This is Small ribosomal subunit protein bS21 from Aeromonas hydrophila subsp. hydrophila (strain ATCC 7966 / DSM 30187 / BCRC 13018 / CCUG 14551 / JCM 1027 / KCTC 2358 / NCIMB 9240 / NCTC 8049).